Reading from the N-terminus, the 164-residue chain is C-phycoerythrin alpha chain (164 aa).

The (2R,3E)-phycoerythrobilin site is built by C82 and C139.

It belongs to the phycobiliprotein family. Heterodimer of an alpha and a beta chain. In terms of processing, contains two covalently linked bilin chromophores.

The protein localises to the cellular thylakoid membrane. Functionally, light-harvesting photosynthetic bile pigment-protein from the phycobiliprotein complex. The sequence is that of C-phycoerythrin alpha chain (cpeA) from Synechocystis sp. (strain PCC 6701).